Here is a 442-residue protein sequence, read N- to C-terminus: uncharacterized protein (442 aa).

Residues 211-269 (LDYSTDKPEDSESEDIELEDSESEDSESEDIDQHGGQGPDDDEFNANFDDPQFDEFDFG) are disordered. The span at 221 to 240 (SESEDIELEDSESEDSESED) shows a compositional bias: acidic residues.

It is found in the virion. This is an uncharacterized protein from Acanthamoeba polyphaga (Amoeba).